The chain runs to 888 residues: Bifunctional uridylyltransferase/uridylyl-removing enzyme (888 aa).

A uridylyltransferase region spans residues 1–338 (MIITSPLLDY…LPNYERKIEE (338 aa)). The interval 182–204 (EQAKRHAQHNNTESNLEPDIKNA) is disordered. The uridylyl-removing stretch occupies residues 339–699 (INENFKLVDG…AHRQSAQDAV (361 aa)). Positions 457–579 (VDAHTLLLIR…LGDMEHLDYL (123 aa)) constitute an HD domain. ACT domains are found at residues 700–781 (QIFI…GLMQ) and 809–887 (MVEI…IVSQ).

The protein belongs to the GlnD family. Mg(2+) serves as cofactor.

It carries out the reaction [protein-PII]-L-tyrosine + UTP = [protein-PII]-uridylyl-L-tyrosine + diphosphate. It catalyses the reaction [protein-PII]-uridylyl-L-tyrosine + H2O = [protein-PII]-L-tyrosine + UMP + H(+). With respect to regulation, uridylyltransferase (UTase) activity is inhibited by glutamine, while glutamine activates uridylyl-removing (UR) activity. Functionally, modifies, by uridylylation and deuridylylation, the PII regulatory proteins (GlnB and homologs), in response to the nitrogen status of the cell that GlnD senses through the glutamine level. Under low glutamine levels, catalyzes the conversion of the PII proteins and UTP to PII-UMP and PPi, while under higher glutamine levels, GlnD hydrolyzes PII-UMP to PII and UMP (deuridylylation). Thus, controls uridylylation state and activity of the PII proteins, and plays an important role in the regulation of nitrogen assimilation and metabolism. The polypeptide is Bifunctional uridylyltransferase/uridylyl-removing enzyme (Acinetobacter baylyi (strain ATCC 33305 / BD413 / ADP1)).